A 302-amino-acid chain; its full sequence is Transcription factor bHLH7 (302 aa).

Residues 124-154 (QPMSQPAPPMPHQQSTIRPRVRARRGQATDP) are disordered. One can recognise a bHLH domain in the interval 150 to 199 (QATDPHSIAERLRRERIAERIRSLQELVPTVNKTDRAAMIDEIVDYVKFL).

Homodimer. Expressed constitutively in roots, leaves, stems and flowers.

The protein resides in the nucleus. This Arabidopsis thaliana (Mouse-ear cress) protein is Transcription factor bHLH7 (BHLH7).